The sequence spans 273 residues: Transposable element Tc1 transposase (273 aa).

Belongs to the transposase 5 family.

The protein localises to the nucleus. In terms of biological role, probably essential for transposable element Tc1 transposition. The insertion of Tc1 is the main cause of spontaneous mutations. It is an endonuclease which can produce a single strand nick at the 5'-end of the transposon. The chain is Transposable element Tc1 transposase (tc1a) from Caenorhabditis elegans.